Reading from the N-terminus, the 327-residue chain is Interleukin-12 subunit beta (327 aa).

The signal sequence occupies residues 1 to 22 (MHPQQLVVSWFSLVLLASPIVA). The Ig-like C2-type domain occupies 23–106 (IWELEKNVYV…LSRSLLLLHK (84 aa)). C50 and C90 are disulfide-bonded. A glycan (N-linked (GlcNAc...) asparagine) is linked at N223. One can recognise a Fibronectin type-III domain in the interval 238–327 (PPKNLQLRPL…WSEWASVSCS (90 aa)).

The protein belongs to the IL-12B family. In terms of assembly, heterodimer with IL12A; disulfide-linked. The heterodimer is known as interleukin IL-12. Heterodimer with IL23A; disulfide-linked. The heterodimer is known as interleukin IL-23. Also secreted as a monomer. Interacts with NBR1; this interaction promotes IL-12 secretion.

The protein localises to the secreted. Cytokine that can act as a growth factor for activated T and NK cells, enhance the lytic activity of NK/lymphokine-activated killer cells, and stimulate the production of IFN-gamma by resting PBMC. In terms of biological role, associates with IL23A to form the IL-23 interleukin, a heterodimeric cytokine which functions in innate and adaptive immunity. IL-23 may constitute with IL-17 an acute response to infection in peripheral tissues. IL-23 binds to a heterodimeric receptor complex composed of IL12RB1 and IL23R, activates the Jak-Stat signaling cascade, stimulates memory rather than naive T-cells and promotes production of pro-inflammatory cytokines. IL-23 induces autoimmune inflammation and thus may be responsible for autoimmune inflammatory diseases and may be important for tumorigenesis. The protein is Interleukin-12 subunit beta (IL12B) of Capra hircus (Goat).